Consider the following 136-residue polypeptide: Large ribosomal subunit protein eL27 (136 aa).

Belongs to the eukaryotic ribosomal protein eL27 family.

The chain is Large ribosomal subunit protein eL27 (RPL27) from Candida albicans (Yeast).